A 149-amino-acid chain; its full sequence is Transcriptional repressor NrdR (149 aa).

A zinc finger spans residues 3–34; the sequence is CPFCSATDTKVIDSRLVADGHQVRRRRECTEC. Positions 49 to 139 constitute an ATP-cone domain; sequence PRVIKRDGTR…VYRAFEDVSQ (91 aa).

This sequence belongs to the NrdR family. Zn(2+) is required as a cofactor.

Its function is as follows. Negatively regulates transcription of bacterial ribonucleotide reductase nrd genes and operons by binding to NrdR-boxes. The sequence is that of Transcriptional repressor NrdR from Shewanella frigidimarina (strain NCIMB 400).